The sequence spans 123 residues: MIQEQTMLNVADNSGARRVMCIKVLGGSHRRYAGVGDIIKITIKEAIPRGKVKKGDVLKPVVVRTNKGVRRPDGSVIRFDGNACVLLNNNSEQPIGTRIFGPVTRELRSEKFMKIISLAPEVL.

It belongs to the universal ribosomal protein uL14 family. Part of the 50S ribosomal subunit. Forms a cluster with proteins L3 and L19. In the 70S ribosome, L14 and L19 interact and together make contacts with the 16S rRNA in bridges B5 and B8.

In terms of biological role, binds to 23S rRNA. Forms part of two intersubunit bridges in the 70S ribosome. This chain is Large ribosomal subunit protein uL14, found in Escherichia coli O6:K15:H31 (strain 536 / UPEC).